Here is a 461-residue protein sequence, read N- to C-terminus: Argininosuccinate lyase (461 aa).

Belongs to the lyase 1 family. Argininosuccinate lyase subfamily.

The protein resides in the cytoplasm. The enzyme catalyses 2-(N(omega)-L-arginino)succinate = fumarate + L-arginine. It functions in the pathway amino-acid biosynthesis; L-arginine biosynthesis; L-arginine from L-ornithine and carbamoyl phosphate: step 3/3. The sequence is that of Argininosuccinate lyase from Chloroflexus aurantiacus (strain ATCC 29366 / DSM 635 / J-10-fl).